The following is an 84-amino-acid chain: Putative membrane protein insertion efficiency factor (84 aa).

Belongs to the UPF0161 family.

The protein localises to the cell inner membrane. Its function is as follows. Could be involved in insertion of integral membrane proteins into the membrane. This Shewanella baltica (strain OS195) protein is Putative membrane protein insertion efficiency factor.